A 501-amino-acid chain; its full sequence is Serine/threonine protein phosphatase 2A 55 kDa regulatory subunit B beta isoform (501 aa).

An N-acetylmethionine modification is found at Met-1. WD repeat units lie at residues 34–73 (QEVD…DHGG), 110–151 (EIEE…IKKI), 220–258 (AHDY…QSFN), 269–309 (DLTE…LCDS), and 328–366 (EIIA…GPVA). The span at 439 to 449 (TPARPSRSIGS) shows a compositional bias: polar residues. The segment at 439-466 (TPARPSRSIGSMTRVVRRGSESPGTEAN) is disordered. The WD 6 repeat unit spans residues 471-501 (DFTTKLLHMAWHPTENSIACAAANSLYMYYA).

The protein belongs to the phosphatase 2A regulatory subunit B family. In terms of assembly, PP2A consists of a common heteromeric enzyme, composed of a catalytic subunit (subunits C), a constant regulatory subunit (subunit A), and a variety of regulatory subunits such as subunits B (the R2/B/PR55/B55, R3/B''/PR72/PR130/PR59 and R5/B'/B56 families). Interacts with SIC/RON3. Expressed ubiquitously.

Its function is as follows. The B regulatory subunit may modulate substrate selectivity and catalytic activity, and may also direct the localization of the catalytic enzyme to a particular subcellular compartment. The sequence is that of Serine/threonine protein phosphatase 2A 55 kDa regulatory subunit B beta isoform (PP2AB2) from Arabidopsis thaliana (Mouse-ear cress).